The following is an 82-amino-acid chain: MLPFVHEQIGTIIVNFFILTVVCAITLLVCLAVLTAIRLCVQCASGVNTLLFVPAFYIYNTGRNAYFKFQENRPPFPPEDWV.

At 1–16 (MLPFVHEQIGTIIVNF) the chain is on the virion surface side. The helical transmembrane segment at 17–37 (FILTVVCAITLLVCLAVLTAI) threads the bilayer. Residues 38–78 (RLCVQCASGVNTLLFVPAFYIYNTGRNAYFKFQENRPPFPP) lie on the Intravirion side of the membrane.

It belongs to the betacoronaviruses E protein family. As to quaternary structure, homopentamer. Interacts with membrane protein M in the budding compartment of the host cell, which is located between endoplasmic reticulum and the Golgi complex. Interacts with Nucleoprotein.

It is found in the host Golgi apparatus membrane. Functionally, plays a central role in virus morphogenesis and assembly. Acts as a viroporin and self-assembles in host membranes forming pentameric protein-lipid pores that allow ion transport. Also plays a role in the induction of apoptosis. This chain is Envelope small membrane protein, found in Tylonycteris pachypus (Lesser bamboo bat).